The following is a 474-amino-acid chain: C6 finger domain transcription factor aclZ (474 aa).

The segment at residues 42–69 is a DNA-binding region (zn(2)-C6 fungal-type); sequence CNQCHAAKVRCSGERTGCDRCNNLQYQC. Disordered regions lie at residues 85-148 and 177-206; these read RGNK…SHSA and MSSD…DSHT. Over residues 90 to 105 the composition is skewed to polar residues; the sequence is VRTTTEALQRPATAST. Over residues 117-138 the composition is skewed to basic and acidic residues; sequence TDQRSENDPLSRSDFGEQDAAH.

The protein localises to the nucleus. Its function is as follows. Transcription factor that specifically regulates the gene cluster that mediates the biosynthesis of aspirochlorine (or antibiotic A30641), an unusual halogenated spiro compound with distinctive antifungal properties due to selective inhibition of protein biosynthesis, and which is also active against bacteria, viruses, and murine tumor cells. This Aspergillus oryzae (strain ATCC 42149 / RIB 40) (Yellow koji mold) protein is C6 finger domain transcription factor aclZ.